Here is a 450-residue protein sequence, read N- to C-terminus: Equilibrative nucleotide transporter 1 (450 aa).

A run of 11 helical transmembrane segments spans residues 63-83 (FAYI…NAFI), 101-121 (IFAV…VVFY), 133-153 (LGLL…LVYV), 168-188 (AAVA…IGVA), 196-216 (MQAV…LRIL), 234-254 (LYFA…NVAH), 300-320 (HGFG…GYIT), 334-354 (ILLI…TAVF), 361-381 (IAVG…GCLH), 394-414 (ILTC…MILA), and 430-450 (TVMF…FWVI).

It belongs to the SLC29A/ENT transporter (TC 2.A.57) family. As to expression, in young seedlings, expressed in root elongation zone, root cortex, root-hair, at the transition to the shoot and cotyledons. Expressed in hydathodes of fully developed leaves and pollen.

It is found in the vacuole membrane. Nucleoside transporter involved in adenosine transport and required for nucleotide metabolism which influences growth and pollen germination. Has high affinity for adenosine when expressed in a heterologous system (yeast). This is Equilibrative nucleotide transporter 1 (ENT1) from Arabidopsis thaliana (Mouse-ear cress).